The primary structure comprises 360 residues: Phospho-N-acetylmuramoyl-pentapeptide-transferase (360 aa).

10 consecutive transmembrane segments (helical) span residues 21–41, 73–93, 94–114, 132–152, 168–188, 199–219, 239–259, 263–283, 288–308, and 338–358; these read YITVRAILTLLTALFISLWIG, TMGGVMILFSIGVSTLLWANL, ANPYIWVCLFVLFGYGAIGFV, WKYFWMSVVALVAILWLYWLG, IMPQLGLFYIVLSYFVIVGTG, GLAIMPTALVAGAFALIAWAT, VVVFCTAIVGASLGFLWFNTY, VFMGDVGSLALGGALGVVAIL, FLLVIMGGVFVVEALSVILQV, and VIIRFWIISLMLVLMGLVTLK.

Belongs to the glycosyltransferase 4 family. MraY subfamily. Mg(2+) is required as a cofactor.

It localises to the cell inner membrane. The enzyme catalyses UDP-N-acetyl-alpha-D-muramoyl-L-alanyl-gamma-D-glutamyl-meso-2,6-diaminopimeloyl-D-alanyl-D-alanine + di-trans,octa-cis-undecaprenyl phosphate = di-trans,octa-cis-undecaprenyl diphospho-N-acetyl-alpha-D-muramoyl-L-alanyl-D-glutamyl-meso-2,6-diaminopimeloyl-D-alanyl-D-alanine + UMP. The protein operates within cell wall biogenesis; peptidoglycan biosynthesis. In terms of biological role, catalyzes the initial step of the lipid cycle reactions in the biosynthesis of the cell wall peptidoglycan: transfers peptidoglycan precursor phospho-MurNAc-pentapeptide from UDP-MurNAc-pentapeptide onto the lipid carrier undecaprenyl phosphate, yielding undecaprenyl-pyrophosphoryl-MurNAc-pentapeptide, known as lipid I. The chain is Phospho-N-acetylmuramoyl-pentapeptide-transferase from Haemophilus influenzae (strain PittEE).